Reading from the N-terminus, the 260-residue chain is ATP synthase subunit a (260 aa).

6 helical membrane passes run 37–57, 95–115, 125–145, 154–174, 191–211, and 233–253; these read FTNASLWMVVTVVAIGLFMTL, FFPFIFSLFMFIFFANMIGMF, IVVTFALAIVVFLGVTLTGFV, VFVPSGVPMALLPLVVAIEII, MLAGHIMLKVFAGFVLTFMTM, and EFLVAALQAYVFTILTCMYLH.

This sequence belongs to the ATPase A chain family. F-type ATPases have 2 components, CF(1) - the catalytic core - and CF(0) - the membrane proton channel. CF(1) has five subunits: alpha(3), beta(3), gamma(1), delta(1), epsilon(1). CF(0) has three main subunits: a(1), b(2) and c(9-12). The alpha and beta chains form an alternating ring which encloses part of the gamma chain. CF(1) is attached to CF(0) by a central stalk formed by the gamma and epsilon chains, while a peripheral stalk is formed by the delta and b chains.

The protein localises to the cell inner membrane. Its function is as follows. Key component of the proton channel; it plays a direct role in the translocation of protons across the membrane. The chain is ATP synthase subunit a from Parvibaculum lavamentivorans (strain DS-1 / DSM 13023 / NCIMB 13966).